A 120-amino-acid polypeptide reads, in one-letter code: Large ribosomal subunit protein bL19 (120 aa).

It belongs to the bacterial ribosomal protein bL19 family.

Its function is as follows. This protein is located at the 30S-50S ribosomal subunit interface and may play a role in the structure and function of the aminoacyl-tRNA binding site. The chain is Large ribosomal subunit protein bL19 from Dichelobacter nodosus (strain VCS1703A).